We begin with the raw amino-acid sequence, 300 residues long: Probable acetyltransferase Rv3034c (300 aa).

A signal peptide spans 1 to 25 (MNVLSLGSSSGVVWGRVPITAPAGA).

It belongs to the transferase hexapeptide repeat family.

May be involved in the biosynthesis of 6-O-methylglucosyl-containing lipopolysaccharides (MGLP). In terms of biological role, regulates host peroxisome homeostasis in response to intracellular redox levels to favor mycobacterial infection in macrophage. Induces the expression of host peroxisome biogenesis and proliferation factors as well as peroxisome associated enzymes. Inhibits the induction of host pexophagy mechanism by down-regulating the expression of pexophagy associated proteins and adapter molecules in infected macrophages. However, during increased oxidative stress conditions, it induces degradation of dysfunctional and damaged peroxisomes. Regulation of peroxisome biogenesis and degradation is dependent upon host p-mTORC1 mediated signaling pathway. This is Probable acetyltransferase Rv3034c from Mycobacterium tuberculosis (strain ATCC 25618 / H37Rv).